Here is a 451-residue protein sequence, read N- to C-terminus: Probable V-type proton ATPase subunit H 1 (451 aa).

Belongs to the V-ATPase H subunit family. V-ATPase is a heteromultimeric enzyme made up of two complexes: the ATP-hydrolytic V1 complex and the proton translocation V0 complex. The V1 complex consists of three catalytic AB heterodimers that form a heterohexamer, three peripheral stalks each consisting of EG heterodimers, one central rotor including subunits D and F, and the regulatory subunits C and H. The proton translocation complex V0 consists of the proton transport subunit a, a ring of proteolipid subunits c9c'', rotary subunit d, subunits e and f, and the accessory subunits vah-19/Ac45 and vah-20/PRR.

Functionally, subunit of the V1 complex of vacuolar(H+)-ATPase (V-ATPase), a multisubunit enzyme composed of a peripheral complex (V1) that hydrolyzes ATP and a membrane integral complex (V0) that translocates protons. V-ATPase is responsible for acidifying and maintaining the pH of intracellular compartments and in some cell types, is targeted to the plasma membrane, where it is responsible for acidifying the extracellular environment. Subunit H is essential for V-ATPase activity, but not for the assembly of the complex. This is Probable V-type proton ATPase subunit H 1 from Caenorhabditis elegans.